Consider the following 343-residue polypeptide: Protein RecA (343 aa).

64–71 contributes to the ATP binding site; it reads GPESSGKT.

The protein belongs to the RecA family.

It localises to the cytoplasm. Can catalyze the hydrolysis of ATP in the presence of single-stranded DNA, the ATP-dependent uptake of single-stranded DNA by duplex DNA, and the ATP-dependent hybridization of homologous single-stranded DNAs. It interacts with LexA causing its activation and leading to its autocatalytic cleavage. In Cereibacter sphaeroides (strain ATCC 17023 / DSM 158 / JCM 6121 / CCUG 31486 / LMG 2827 / NBRC 12203 / NCIMB 8253 / ATH 2.4.1.) (Rhodobacter sphaeroides), this protein is Protein RecA.